A 467-amino-acid polypeptide reads, in one-letter code: Ribosomal RNA small subunit methyltransferase F (467 aa).

S-adenosyl-L-methionine-binding positions include 119–125 (ASAPGSK), Glu-143, Asp-170, and Asp-188. Residue Cys-241 is the Nucleophile of the active site.

It belongs to the class I-like SAM-binding methyltransferase superfamily. RsmB/NOP family.

It is found in the cytoplasm. The catalysed reaction is cytidine(1407) in 16S rRNA + S-adenosyl-L-methionine = 5-methylcytidine(1407) in 16S rRNA + S-adenosyl-L-homocysteine + H(+). Specifically methylates the cytosine at position 1407 (m5C1407) of 16S rRNA. This chain is Ribosomal RNA small subunit methyltransferase F, found in Shewanella amazonensis (strain ATCC BAA-1098 / SB2B).